Here is a 122-residue protein sequence, read N- to C-terminus: Proximal tubules-expressed gene protein (122 aa).

Residues 33-53 (WLTGLIAMTVFLFLVLVVYVA) form a helical membrane-spanning segment.

The protein belongs to the PDZK1-interacting protein 1/SMIM24 family. As to expression, expressed in prospective pronephric mesoderm at the late gastrula stage. After neurulation, expressed in the intermediate mesoderm, eye placode and blood islands. Expression becomes restricted to the pronephric proximal tubule during embryogenesis, but is absent from the connecting tubules.

The protein resides in the membrane. In terms of biological role, essential for pronephric tubule development, acting upstream of pax8 and lhx1/lim1 and downstream of retinoic acid signaling to induce pronephric mesoderm to form pronephric tubule-specific cells. The chain is Proximal tubules-expressed gene protein (pteg) from Xenopus laevis (African clawed frog).